We begin with the raw amino-acid sequence, 262 residues long: MGKYMRKFRGATGEELAAMEVTQVVGVRTRSRSAAAAGATTTKVQAASAASTRRRKALLPTAVVGTTRRDGGSCYLQLRSRMLFMAPPRPAPAARAPVVAEAAGSGNGAAAHAAAGLSRCSSTASSVDAAAQDRSLACRSDVAEAGSEHVPEGSASDSASGRDRERRETTPSSFLPGEVSDLESDLAGGQKRSRPLPSAATASAQQATRPKIPPAAEIEAFFAAAEEAEAKRFAAKYNFDVVRGVPLDAGRFEWTPVVSSRS.

Positions 140 to 212 (SDVAEAGSEH…SAQQATRPKI (73 aa)) are disordered. Positions 160 to 169 (SGRDRERRET) are enriched in basic and acidic residues. A compositionally biased stretch (low complexity) spans 198–208 (SAATASAQQAT).

It belongs to the CDI family. ICK/KRP subfamily.

The polypeptide is Cyclin-dependent kinase inhibitor 1 (KRP1) (Oryza sativa subsp. indica (Rice)).